The following is a 279-amino-acid chain: 4-diphosphocytidyl-2-C-methyl-D-erythritol kinase (279 aa).

The active site involves lysine 11. Residue 95 to 105 (PVAAGLGGGSS) coordinates ATP. The active site involves aspartate 137.

This sequence belongs to the GHMP kinase family. IspE subfamily.

The catalysed reaction is 4-CDP-2-C-methyl-D-erythritol + ATP = 4-CDP-2-C-methyl-D-erythritol 2-phosphate + ADP + H(+). The protein operates within isoprenoid biosynthesis; isopentenyl diphosphate biosynthesis via DXP pathway; isopentenyl diphosphate from 1-deoxy-D-xylulose 5-phosphate: step 3/6. In terms of biological role, catalyzes the phosphorylation of the position 2 hydroxy group of 4-diphosphocytidyl-2C-methyl-D-erythritol. This is 4-diphosphocytidyl-2-C-methyl-D-erythritol kinase from Geobacter sulfurreducens (strain ATCC 51573 / DSM 12127 / PCA).